The primary structure comprises 251 residues: uncharacterized protein (251 aa).

This is an uncharacterized protein from Mycoplasma pneumoniae (strain ATCC 29342 / M129 / Subtype 1) (Mycoplasmoides pneumoniae).